We begin with the raw amino-acid sequence, 175 residues long: MSIKQYSQEQLKQMALVEIAHEIFSEHKKPVPFQELLNEMISLLGVTKEELGDRIAQFYTDLNIDGRFIALSDQTWGLRSWYPYDQLDEETQPTVKAKKKKAKKVVEEDLDLDEFEEVDEDDIDLDEIEEDIDLEADSFDDEDIDEEDDDELEIEDEMIEEDEEDYDDEEEDRKD.

Residues 14-81 form the HTH HARE-type domain; it reads MALVEIAHEI…SDQTWGLRSW (68 aa). The segment at 110 to 175 is disordered; it reads LDLDEFEEVD…YDDEEEDRKD (66 aa).

The protein belongs to the RpoE family. As to quaternary structure, RNAP is composed of a core of 2 alpha, a beta and a beta' subunits. The core is associated with a delta subunit and one of several sigma factors.

In terms of biological role, participates in both the initiation and recycling phases of transcription. In the presence of the delta subunit, RNAP displays an increased specificity of transcription, a decreased affinity for nucleic acids, and an increased efficiency of RNA synthesis because of enhanced recycling. This is Probable DNA-directed RNA polymerase subunit delta from Bacillus velezensis (strain DSM 23117 / BGSC 10A6 / LMG 26770 / FZB42) (Bacillus amyloliquefaciens subsp. plantarum).